Consider the following 358-residue polypeptide: Chorismate synthase (358 aa).

NADP(+) is bound at residue R47. Residues 124–126 (RSS), 240–241 (NA), G284, 299–303 (KPIAT), and R325 contribute to the FMN site.

It belongs to the chorismate synthase family. In terms of assembly, homotetramer. Requires FMNH2 as cofactor.

It carries out the reaction 5-O-(1-carboxyvinyl)-3-phosphoshikimate = chorismate + phosphate. It functions in the pathway metabolic intermediate biosynthesis; chorismate biosynthesis; chorismate from D-erythrose 4-phosphate and phosphoenolpyruvate: step 7/7. Its function is as follows. Catalyzes the anti-1,4-elimination of the C-3 phosphate and the C-6 proR hydrogen from 5-enolpyruvylshikimate-3-phosphate (EPSP) to yield chorismate, which is the branch point compound that serves as the starting substrate for the three terminal pathways of aromatic amino acid biosynthesis. This reaction introduces a second double bond into the aromatic ring system. The sequence is that of Chorismate synthase from Bacteroides thetaiotaomicron (strain ATCC 29148 / DSM 2079 / JCM 5827 / CCUG 10774 / NCTC 10582 / VPI-5482 / E50).